The chain runs to 328 residues: Dolichyl-diphosphooligosaccharide--protein glycosyltransferase subunit MAGT1 (328 aa).

Positions 1–22 (MAALPVLVLVLLLACGGPRAAG) are cleaved as a signal peptide. At 23–177 (QKRKEMVLSE…DVNIRVIRPP (155 aa)) the chain is on the extracellular side. The 129-residue stretch at 40–168 (WTSKRSVIRM…LARWVADRTD (129 aa)) folds into the Thioredoxin domain. Asn-64 carries an N-linked (GlcNAc...) asparagine glycan. Cys-80 and Cys-83 form a disulfide bridge. Residues 178 to 198 (NYAGPLMLGLLLAVIGGLVYL) form a helical membrane-spanning segment. At 199 to 211 (RGSNLDFLYNKTG) the chain is on the cytoplasmic side. Residues 212-232 (WAFAALCFVLAMTSGQMWNHI) form a helical membrane-spanning segment. The Extracellular portion of the chain corresponds to 233–257 (RGPPYAHKNPHTGQVNYIHGSSQAQ). Residues 258–278 (FVAETHIVLLFNGGVTLGMVL) form a helical membrane-spanning segment. Over 279–293 (LHEAATSDMDVGKRK) the chain is Cytoplasmic. A helical transmembrane segment spans residues 294–314 (IMCIAGIGLVVFFFSWLLSVF). Residues 315–328 (RSKYHGYPYSFLMS) are Extracellular-facing.

The protein belongs to the OST3/OST6 family. Accessory component of the STT3B-containing form of the oligosaccharyltransferase (OST) complex. OST exists in two different complex forms which contain common core subunits RPN1, RPN2, OST48, OST4, DAD1 and TMEM258, either STT3A or STT3B as catalytic subunits, and form-specific accessory subunits. OST can form stable complexes with the Sec61 complex or with both the Sec61 and TRAP complexes.

Its subcellular location is the cell membrane. It is found in the endoplasmic reticulum. It localises to the endoplasmic reticulum membrane. It participates in protein modification; protein glycosylation. Accessory component of the STT3B-containing form of the N-oligosaccharyl transferase (OST) complex which catalyzes the transfer of a high mannose oligosaccharide from a lipid-linked oligosaccharide donor to an asparagine residue within an Asn-X-Ser/Thr consensus motif in nascent polypeptide chains. Involved in N-glycosylation of STT3B-dependent substrates. Specifically required for the glycosylation of a subset of acceptor sites that are near cysteine residues; in this function seems to act redundantly with TUSC3. In its oxidized form proposed to form transient mixed disulfides with a glycoprotein substrate to facilitate access of STT3B to the unmodified acceptor site. Also has oxidoreductase-independent functions in the STT3B-containing OST complex possibly involving substrate recognition. Could indirectly play a role in Mg(2+) transport in epithelial cells. The sequence is that of Dolichyl-diphosphooligosaccharide--protein glycosyltransferase subunit MAGT1 from Gallus gallus (Chicken).